A 166-amino-acid chain; its full sequence is MASLTSAAVTIPSFTGLKAGRAPTTPSTSIKPPTPMSFSVKASFKEAIGTALVATAAGAVLASNALAVEVLLGGSDGSLAFVPSNIEVAAGETVVFKNNAGFPHNVLFDEDEVPKGVDAGAISMKEEDLLNAPGETFSVTLKEKGTYSIYCSPHQGAGMAGKITVN.

Residues 1-67 (MASLTSAAVT…GAVLASNALA (67 aa)) constitute a chloroplast transit peptide. A Plastocyanin-like domain is found at 68-166 (VEVLLGGSDG…AGMAGKITVN (99 aa)). Cu cation is bound by residues histidine 104, cysteine 151, histidine 154, and methionine 159.

Belongs to the plastocyanin family. Cu(2+) is required as a cofactor.

It is found in the plastid. Its subcellular location is the chloroplast thylakoid membrane. Participates in electron transfer between P700 and the cytochrome b6-f complex in photosystem I. This chain is Plastocyanin, chloroplastic (PETE), found in Fritillaria agrestis (Stinkbells).